Consider the following 763-residue polypeptide: ATP-dependent RNA helicase glh-1 (763 aa).

The interval 1–30 (MSDGWSDSESAAKAKTGFGSGGGFGGGNNG) is disordered. Residues 18 to 30 (FGSGGGFGGGNNG) are compositionally biased toward gly residues. Tandem repeats lie at residues 24–33 (FGGGNNGGSG), 34–43 (FGGGKNGGTG), 44–53 (FGGGNTGGSG), 54–63 (FGGGNTGGSG), 64–73 (FGGGKTGGSG), 74–83 (FGGGNTCGSG), and 84–93 (FGGGSTGGSP). Residues 24–93 (FGGGNNGGSG…FGGGSTGGSP (70 aa)) are 7 X 10 AA tandem repeats, Gly-rich. 2 CCHC-type zinc fingers span residues 158–175 (NNCFNCQQPGHRSSDCPE) and 183–200 (RVCYNCQQPGHTSRECTE). Positions 193–230 (HTSRECTEERKPREGRTGGFGGGAGFGNNGGNDGFGGD) are disordered. Residues 194-208 (TSRECTEERKPREGR) are compositionally biased toward basic and acidic residues. A compositionally biased stretch (gly residues) spans 209–230 (TGGFGGGAGFGNNGGNDGFGGD). 2 consecutive CCHC-type zinc fingers follow at residues 242–259 (MKCFNCKGEGHRSAECPE) and 262–279 (RGCFNCGEQGHRSNECPN). The Q motif motif lies at 341 to 369 (KTFAEANLTETMQKNVAHAGYSKTTPIQQ). Residues 372-556 (LPLVHQGYDI…RAFLRENYVM (185 aa)) form the Helicase ATP-binding domain. 385 to 392 (AQTGSGKT) serves as a coordination point for ATP. Positions 423-427 (ILTPT) match the Phosphodegron motif. The short motif at 499–502 (DEAD) is the DEAD box element. The region spanning 592–739 (DIDSYTTEKS…IVPDWMQGAA (148 aa)) is the Helicase C-terminal domain.

It belongs to the DEAD box helicase family. DDX4/VASA subfamily. In terms of assembly, interacts with csn-5; this may prevent glh-1 degradation induced by kgb-1. Interacts with zyx-1. Interacts (via the N-terminal region containing the four CCHC zinc fingers) with pan-1. Interacts with kgb-1; this may promote glh-1 degradation by the proteasome. In terms of processing, phosphorylated by kgb-1 (in vitro); this may be responsible for its degradation by the proteasome.

It localises to the cytoplasm. The protein resides in the cytoplasmic granule. It is found in the perinuclear region. The enzyme catalyses ATP + H2O = ADP + phosphate + H(+). Its function is as follows. Probable ATP-binding RNA helicase. May act redundantly with the P-granule component glh-4 to regulate the formation of the granular structure of P-granules in embryos. Plays a role in positively regulating the localization of pgl-1 to P-granules. May play a role in transgenerational epigenetic inheritance. May protect somatic cells from excessive apoptosis during normal development. In Caenorhabditis elegans, this protein is ATP-dependent RNA helicase glh-1.